A 505-amino-acid polypeptide reads, in one-letter code: MTTFTKLSEQETPSISVHASRRISKINPNIYAGFTEHMGRCIYGGIYDPGNPLSDENGFRKDVLEALKELNIPVIRYPGGNFTATYHWIDGVGPKDQRPARPELAWLGTETNHFGTDEFMKWCELLGTEPYFCLNFGTGTLDEALAWVEYCNGTKDTYYANLRRKNGREEPYNIKYWALGNEVWGPWQVAQMTKEEYAHKAYQWAKALKLLDPSLKLILCGQDGTASWDYYTLKQCLLPAHSPLSTSTVPLIDMHSIHMYTCGSTHLPNVTAPLAAERAIEITSSLIDLAMIENGIPPDQPRPTICFDEWNVWDPLRAEGSKGAEESYTLSDALAVAIWLNVFVRKSKDVGMACIAQSVNVISPLMTTKDGIIKQTIWWPLYLFSKYMRGWTINAHVSCGAYEGETSPKWIRAVKDTPWLDVSATLGEDGYANVAVVNISDEKDMECKFEGATGDVTVFTVTGDSVSACNMKGKEEVGLTESTWDGKGAYKFPRHSLTLLRWKAE.

N-linked (GlcNAc...) asparagine glycosylation is found at Asn81, Asn152, Asn269, and Asn438.

This sequence belongs to the glycosyl hydrolase 51 family.

It localises to the secreted. It catalyses the reaction Hydrolysis of terminal non-reducing alpha-L-arabinofuranoside residues in alpha-L-arabinosides.. It participates in glycan metabolism; L-arabinan degradation. Functionally, alpha-L-arabinofuranosidase involved in the degradation of arabinoxylan, a major component of plant hemicellulose. Acts only on small linear 1,5-alpha-linked L-arabinofuranosyl oligosaccharides. This is Probable alpha-L-arabinofuranosidase C (abfC) from Aspergillus fumigatus (strain ATCC MYA-4609 / CBS 101355 / FGSC A1100 / Af293) (Neosartorya fumigata).